The primary structure comprises 157 residues: 2-C-methyl-D-erythritol 2,4-cyclodiphosphate synthase (157 aa).

Residues aspartate 8 and histidine 10 each contribute to the a divalent metal cation site. 4-CDP-2-C-methyl-D-erythritol 2-phosphate is bound by residues 8 to 10 (DVH) and 34 to 35 (HS). An a divalent metal cation-binding site is contributed by histidine 42. Residues 56 to 58 (DIG), 61 to 65 (FPDTD), 132 to 135 (TTTE), phenylalanine 139, and arginine 142 each bind 4-CDP-2-C-methyl-D-erythritol 2-phosphate.

Belongs to the IspF family. Homotrimer. Requires a divalent metal cation as cofactor.

The enzyme catalyses 4-CDP-2-C-methyl-D-erythritol 2-phosphate = 2-C-methyl-D-erythritol 2,4-cyclic diphosphate + CMP. It functions in the pathway isoprenoid biosynthesis; isopentenyl diphosphate biosynthesis via DXP pathway; isopentenyl diphosphate from 1-deoxy-D-xylulose 5-phosphate: step 4/6. Functionally, involved in the biosynthesis of isopentenyl diphosphate (IPP) and dimethylallyl diphosphate (DMAPP), two major building blocks of isoprenoid compounds. Catalyzes the conversion of 4-diphosphocytidyl-2-C-methyl-D-erythritol 2-phosphate (CDP-ME2P) to 2-C-methyl-D-erythritol 2,4-cyclodiphosphate (ME-CPP) with a corresponding release of cytidine 5-monophosphate (CMP). This is 2-C-methyl-D-erythritol 2,4-cyclodiphosphate synthase from Pseudomonas putida (strain W619).